An 819-amino-acid polypeptide reads, in one-letter code: Solute carrier organic anion transporter family member 74D (819 aa).

Positions 1-157 (MTKSNGDVEA…GSSAESSSSC (157 aa)) are disordered. Topologically, residues 1-174 (MTKSNGDVEA…RWARRFASTH (174 aa)) are cytoplasmic. Polar residues-rich tracts occupy residues 24–34 (GHGQLNGNGYH), 43–62 (SQAF…NGEV), and 71–81 (LYESTPSNNNE). Composition is skewed to low complexity over residues 91 to 111 (LKNG…NGHS) and 144 to 157 (DLNG…SSSC). A helical membrane pass occupies residues 175–195 (VFMVVFLLAYILQGMYMTYFV). Residues 196–213 (SVITTIEKLFQIKSKTTG) lie on the Extracellular side of the membrane. The chain crosses the membrane as a helical span at residues 214 to 234 (ILLSASEMGQICTAMLLTYFA). Over 235-242 (GRGHRPRW) the chain is Cytoplasmic. The chain crosses the membrane as a helical span at residues 243-263 (IACGMVLFSIAAFSCALPHFI). At 264-332 (FGEQLMHSSV…LEQASHSKIT (69 aa)) the chain is on the extracellular side. Residues asparagine 284, asparagine 293, and asparagine 309 are each glycosylated (N-linked (GlcNAc...) asparagine). The helical transmembrane segment at 333–353 (VIVLCIFFGSLLSSGIGQTAV) threads the bilayer. At 354–373 (ATLGIPYIDDNVGSKQSPMY) the chain is on the cytoplasmic side. Residues 374 to 394 (MAVTIGMRILGPASGFIFGSF) traverse the membrane as a helical segment. Over 395-413 (CTRWYVNFSNPGFDATDPR) the chain is Extracellular. An N-linked (GlcNAc...) asparagine glycan is attached at asparagine 401. Residues 414 to 434 (WIGAWWLGPVAIGSLMLLASI) traverse the membrane as a helical segment. Residues 435–488 (AMFSFPKQLRGKQKPPGQTATPAAPVEPEEKPKLKDFPKTVRRQLSNDILMFRT) are Cytoplasmic-facing. The disordered stretch occupies residues 444–466 (RGKQKPPGQTATPAAPVEPEEKP). Residues 489–509 (ASCVFHLLPIAGLYTFLPKYL) form a helical membrane-spanning segment. Over 510-522 (ETQFRLATYDANM) the chain is Extracellular. A helical membrane pass occupies residues 523–543 (IAAFCGILVMGIGIVISGLFI). Residues 544–553 (LKRKPTARGV) are Cytoplasmic-facing. Residues 554 to 574 (AAWIAFTALVYSAGMIILMFI) form a helical membrane-spanning segment. Residues 575-667 (GCSMNDFAGY…NGYCDNNCKN (93 aa)) lie on the Extracellular side of the membrane. One can recognise a Kazal-like domain in the interval 593-651 (ALIEPTCSAALNCTCDKENFAPICADGKMYISACHAGCSSSSLRPSDNRTLYSDCACIP). 3 disulfides stabilise this stretch: cysteine 599/cysteine 630, cysteine 607/cysteine 626, and cysteine 616/cysteine 649. Residue asparagine 604 is glycosylated (N-linked (GlcNAc...) asparagine). Residue asparagine 640 is glycosylated (N-linked (GlcNAc...) asparagine). A helical membrane pass occupies residues 668–688 (FIYFILIFAICVFMHSTSEVG). Over 689 to 707 (SMLLVMRCTHPKDKAMAMG) the chain is Cytoplasmic. The chain crosses the membrane as a helical span at residues 708-728 (VIQSAIGLFGNVPCPIIYGAV). The Extracellular segment spans residues 729 to 756 (VDSACLIWKSVCGKHGACSLYDADTFRQ). A helical membrane pass occupies residues 757–777 (YFLGITAGIMFLAFLMDLVVW). The Cytoplasmic portion of the chain corresponds to 778–819 (RKAHRIDIAPEDPQEGGPASNGRTLEVSESKQPITPAPDTTV). Residues 787–819 (PEDPQEGGPASNGRTLEVSESKQPITPAPDTTV) form a disordered region. Polar residues predominate over residues 807–819 (SKQPITPAPDTTV).

Belongs to the organo anion transporter (TC 2.A.60) family.

The protein localises to the cell membrane. Transporter that mediates the cellular uptake of ecdysteroids, including ecdysone, from the hemolymph. This is Solute carrier organic anion transporter family member 74D from Drosophila melanogaster (Fruit fly).